A 98-amino-acid chain; its full sequence is UPF0473 protein LAR_0522 (98 aa).

It belongs to the UPF0473 family.

The sequence is that of UPF0473 protein LAR_0522 from Limosilactobacillus reuteri subsp. reuteri (strain JCM 1112) (Lactobacillus reuteri).